A 356-amino-acid polypeptide reads, in one-letter code: Tyrosine recombinase XerS (356 aa).

A Core-binding (CB) domain is found at 16–121 (IMPWYVLDYY…ALSSLYKYLT (106 aa)). The 186-residue stretch at 169–354 (AFLDYVDKEY…VNDEQKNALD (186 aa)) folds into the Tyr recombinase domain. Catalysis depends on residues R210, K234, H306, R309, and H332. Residue Y341 is the O-(3'-phospho-DNA)-tyrosine intermediate of the active site.

The protein belongs to the 'phage' integrase family. XerS subfamily.

Its subcellular location is the cytoplasm. With respect to regulation, ftsK is required for recombination. In terms of biological role, site-specific tyrosine recombinase, which acts by catalyzing the cutting and rejoining of the recombining DNA molecules. Essential to convert dimers of the bacterial chromosome into monomers to permit their segregation at cell division. The polypeptide is Tyrosine recombinase XerS (Streptococcus pyogenes serotype M2 (strain MGAS10270)).